A 1148-amino-acid chain; its full sequence is Envelopment polyprotein (1148 aa).

An N-terminal signal peptide occupies residues Met1 to Ala23. The Lumenal portion of the chain corresponds to Ala24–Met495. 6 cysteine pairs are disulfide-bonded: Cys34–Cys159, Cys68–Cys165, Cys117–Cys136, Cys141–Cys146, Cys183–Cys193, and Cys218–Cys257. The N-linked (GlcNAc...) asparagine; by host glycan is linked to Asn142. Asn357 is a glycosylation site (N-linked (GlcNAc...) asparagine; by host). 4 cysteine pairs are disulfide-bonded: Cys386/Cys445, Cys390/Cys399, Cys415/Cys434, and Cys462/Cys485. A glycan (N-linked (GlcNAc...) asparagine; by host) is linked at Asn409. A helical membrane pass occupies residues Leu496–Leu516. At Lys517–Phe637 the chain is on the cytoplasmic side. A binding to the ribonucleoprotein region spans residues Cys526–Lys543. CCHC-type zinc fingers lie at residues Cys555 to Cys575 and Cys580 to Cys601. Binding to the ribonucleoprotein regions lie at residues Phe598–Leu615, Lys602–Lys613, and Met621–Ser635. Residues Met621–Cys644 enclose the ITAM domain. The YxxL motif lies at Tyr625 to Leu628. Residues Phe638–Ala658 form a helical membrane-spanning segment. Residues Glu659 to Asn1114 lie on the Lumenal side of the membrane. 8 cysteine pairs are disulfide-bonded: Cys745–Cys780, Cys749–Cys787, Cys761–Cys894, Cys775–Cys905, Cys790–Cys913, Cys816–Cys825, Cys833–Cys842, and Cys873–Cys877. The fusion loop stretch occupies residues Tyr767 to Cys787. A glycan (N-linked (GlcNAc...) asparagine; by host) is linked at Asn937. Intrachain disulfides connect Cys979/Cys1009, Cys1002/Cys1054, Cys1019/Cys1024, Cys1055/Cys1060, and Cys1094/Cys1098. Residues Trp1115–Cys1135 form a helical membrane-spanning segment. Binding to the ribonucleoprotein stretches follow at residues Leu1131–Arg1143 and Leu1131–Pro1148. Over Cys1136–Pro1148 the chain is Cytoplasmic.

Belongs to the hantavirus envelope glycoprotein family. In terms of assembly, homodimer. Homotetramer; forms heterotetrameric Gn-Gc spikes in the pre-fusion conformation. Interacts (via C-terminus) with the nucleoprotein. Interacts with host TUFM; this interaction contributes to the virus-induced degradation of mitochondria by autophagy, which leads to degradation of host MAVS and inhibition of type I interferon (IFN) responses. Interacts with host MAP1LC3B; this interaction contributes to the virus-induced degradation of mitochondria by autophagy, which leads to degradation of host MAVS and inhibition of type I interferon (IFN) responses. Homodimer. Homotetramer; forms heterotetrameric Gn-Gc spikes in the pre-fusion conformation. Homotrimer; forms homotrimer in the post-fusion conformation at acidic pH. Interacts (via C-terminus) with the nucleoprotein. In terms of processing, envelope polyprotein precursor is quickly cleaved in vivo just after synthesis, presumably by host signal peptidase.

It is found in the virion membrane. The protein localises to the host cell surface. It localises to the host Golgi apparatus membrane. Its subcellular location is the host endoplasmic reticulum membrane. The protein resides in the host mitochondrion. Functionally, forms homotetramers with glycoprotein C at the surface of the virion. Attaches the virion to host cell receptors including integrin ITGAV/ITGB3. This attachment induces virion internalization predominantly through clathrin-dependent endocytosis. Mediates the assembly and budding of infectious virus particles through its interaction with the nucleocapsid protein and the viral genome. May dysregulate normal immune and endothelial cell responses through an ITAM motif. Translocates to mitochondria, binds to host TUFM and recruits MAP1LC3B. These interactions induce mitochondrial autophagy and therefore destruction of host MAVS leading to inhibition of type I interferon (IFN) responses. Concomitant breakdown of glycoprotein N is apparently prevented by the nucleoprotein that may inhibit Gn-stimulated autophagosome-lysosome fusion. Interacts with the viral genomic RNA. Its function is as follows. Forms homotetramers with glycoprotein N at the surface of the virion. Attaches the virion to host cell receptors including integrin ITGAV/ITGB3. This attachment induces virion internalization predominantly through clathrin-dependent endocytosis. Class II fusion protein that promotes fusion of viral membrane with host endosomal membrane after endocytosis of the virion. This is Envelopment polyprotein (GP) from Puumala virus (strain K27).